The sequence spans 197 residues: uncharacterized protein (197 aa).

Residues 1–10 (MKNNYTSLKS) are compositionally biased toward polar residues. Disordered regions lie at residues 1–46 (MKNN…PPYS) and 54–73 (LVPEDSSTGPTETANPNVER). The span at 18-37 (LKTGHEIDLEKGPLPEHNSE) shows a compositional bias: basic and acidic residues. Residues 58–69 (DSSTGPTETANP) show a composition bias toward polar residues. 2 consecutive transmembrane segments (helical) span residues 83-105 (NIYSLLRLLIAVLAVSVVFFTAW) and 120-142 (AFFVLIGLTCLILLITMILEPGL).

The protein belongs to the WTF family.

The protein localises to the endoplasmic reticulum membrane. This is an uncharacterized protein from Schizosaccharomyces pombe (strain 972 / ATCC 24843) (Fission yeast).